Here is a 129-residue protein sequence, read N- to C-terminus: KVYERCELAAAMKRLGLDNYRGYSLGNWVCAANYESSFNTQATNRNTDGSTDYGILEINSRWWCDNGKTPRAKNACGIPCSVLLRSDITEAVKCAKRIVSDGDGMNAWVAWRNRCKGTDVSRWIRGCRL.

One can recognise a C-type lysozyme domain in the interval 1–129 (KVYERCELAA…VSRWIRGCRL (129 aa)). 4 disulfide bridges follow: Cys-6/Cys-127, Cys-30/Cys-115, Cys-64/Cys-80, and Cys-76/Cys-94. Active-site residues include Glu-35 and Asp-52.

This sequence belongs to the glycosyl hydrolase 22 family.

It localises to the secreted. The enzyme catalyses Hydrolysis of (1-&gt;4)-beta-linkages between N-acetylmuramic acid and N-acetyl-D-glucosamine residues in a peptidoglycan and between N-acetyl-D-glucosamine residues in chitodextrins.. Its function is as follows. Lysozymes have primarily a bacteriolytic function; those in tissues and body fluids are associated with the monocyte-macrophage system and enhance the activity of immunoagents. The chain is Lysozyme C-3 from Anas platyrhynchos (Mallard).